The chain runs to 151 residues: Group 10 secretory phospholipase A2 (151 aa).

An N-terminal signal peptide occupies residues 1 to 17; that stretch reads MLLLLLLLLLGPGPGFS. Positions 18-28 are excised as a propeptide; it reads EATRRSHVYKR. Disulfide bonds link Cys-39–Cys-97, Cys-53–Cys-143, Cys-55–Cys-71, Cys-70–Cys-125, Cys-76–Cys-150, Cys-77–Cys-118, Cys-86–Cys-111, and Cys-104–Cys-116. Ca(2+)-binding residues include Tyr-54, Gly-56, and Gly-58. The active site involves His-74. Residue Asp-75 coordinates Ca(2+). Residue Asp-119 is part of the active site.

It belongs to the phospholipase A2 family. In terms of assembly, interacts with PLA2R1; this interaction mediates PLA2G10 clearance and inactivation. Requires Ca(2+) as cofactor. In terms of tissue distribution, expressed at high levels in testis and the gastrointestinal tract including stomach and colon. Expressed at lower levels in other tissues including small intestine, uterus, oviduct, lung, thymus, spleen and brain. Expressed in Paneth-like secretory epithelial cells of the colon. Expressed in gastric and ileac epithelial cells and in glandular epithelium of intestinal mucosa (at protein level). Expressed in late spermatogenic cells, spermatocytes and spermatids, but not spermatogonia in seminiferous tubules (at protein level). Expressed mainly in the apical side of endometrial epithelial cells and in the interstitium beneath the epithelium of uterus (at protein level). Expressed in resident spleen macrophages (at protein level). Expressed at outermost layer of hair follicles. Expressed in dorsal root ganglia in both NEFH-positive A-fibers and PRPH-positive C-fibers (at protein level).

The protein resides in the secreted. It is found in the lysosome. Its subcellular location is the cytoplasmic vesicle. It localises to the secretory vesicle. The protein localises to the acrosome. The enzyme catalyses a 1,2-diacyl-sn-glycero-3-phosphocholine + H2O = a 1-acyl-sn-glycero-3-phosphocholine + a fatty acid + H(+). It catalyses the reaction 1-hexadecanoyl-2-(9Z-octadecenoyl)-sn-glycero-3-phosphocholine + H2O = 1-hexadecanoyl-sn-glycero-3-phosphocholine + (9Z)-octadecenoate + H(+). It carries out the reaction 1-octadecanoyl-2-(5Z,8Z,11Z,14Z-eicosatetraenoyl)-sn-glycero-3-phosphocholine + H2O = 1-octadecanoyl-sn-glycero-3-phosphocholine + (5Z,8Z,11Z,14Z)-eicosatetraenoate + H(+). The catalysed reaction is 1,2-dihexadecanoyl-sn-glycero-3-phosphocholine + H2O = 1-hexadecanoyl-sn-glycero-3-phosphocholine + hexadecanoate + H(+). The enzyme catalyses 1-hexadecanoyl-2-(9Z-octadecenoyl)-sn-glycero-3-phosphoglycerol + H2O = 1-hexadecanoyl-sn-glycero-3-phosphoglycerol + (9Z)-octadecenoate + H(+). It catalyses the reaction 1,2-dihexadecanoyl-sn-glycero-3-phospho-(1'-sn-glycerol) + H2O = 1-hexadecanoyl-sn-glycero-3-phospho-(1'-sn-glycerol) + hexadecanoate + H(+). It carries out the reaction 1-hexadecanoyl-2-(9Z-octadecenoyl)-sn-glycero-3-phospho-L-serine + H2O = 1-hexadecanoyl-sn-glycero-3-phospho-L-serine + (9Z)-octadecenoate + H(+). The catalysed reaction is 1-hexadecanoyl-2-(9Z,12Z-octadecadienoyl)-sn-glycero-3-phosphoethanolamine + H2O = 1-hexadecanoyl-sn-glycero-3-phosphoethanolamine + (9Z,12Z)-octadecadienoate + H(+). The enzyme catalyses 1-hexadecanoyl-2-(9Z-octadecenoyl)-sn-glycero-3-phosphate + H2O = 1-hexadecanoyl-sn-glycero-3-phosphate + (9Z)-octadecenoate + H(+). It catalyses the reaction 1-O-hexadecyl-2-acetyl-sn-glycero-3-phosphocholine + H2O = 1-O-hexadecyl-sn-glycero-3-phosphocholine + acetate + H(+). Its function is as follows. Secretory calcium-dependent phospholipase A2 that primarily targets extracellular phospholipids. Hydrolyzes the ester bond of the fatty acyl group attached at sn-2 position of phospholipids with preference for phosphatidylcholines and phosphatidylglycerols over phosphatidylethanolamines. Preferentially releases sn-2 omega-6 and omega-3 polyunsaturated fatty acyl (PUFA) chains over saturated fatty acyls. Contributes to phospholipid remodeling of very low-density lipoprotein (VLDL), low-density lipoprotein (LDL) and high-density lipoprotein (HDL) particles. Hydrolyzes LDL phospholipids releasing unsaturated fatty acids that regulate macrophage differentiation toward foam cells. Efficiently hydrolyzes and inactivates PAF, a potent lipid mediator present in oxidized LDL. May act in an autocrine and paracrine manner. Secreted by lung epithelium, targets membrane phospholipids of infiltrating eosinophils, releasing arachidonate and boosting eicosanoid and cysteinyl leukotriene synthesis involved in airway inflammatory response. Secreted by gut epithelium, hydrolyzes dietary and biliary phosphatidylcholines in the gastrointestinal lumen, thereby regulating adipogenesis and body weight. Plays a stem cell regulator role in colon epithelium. Within intracellular compartment, mediates Paneth-like cell differentiation and its stem cell supporting functions by inhibiting Wnt signaling pathway in intestinal stem cell (ISC). Secreted in the intestinal lumen upon inflammation, acts in an autocrine way and promotes prostaglandin E2 synthesis that stimulates the Wnt signaling pathway in ISCs and tissue regeneration. May participate in hair follicle morphogenesis by regulating phosphatidylethanolamines metabolism at the outermost epithelial layer and facilitating melanin synthesis. By generating lysophosphatidylcholines (LPCs) at sperm acrosome controls sperm cell capacitation, acrosome reaction and overall fertility. May promote neurite outgrowth in neuron fibers involved in nociception. Contributes to lipid remodeling of cellular membranes and generation of lipid mediators involved in pathogen clearance. Cleaves sn-2 fatty acyl chains of phosphatidylglycerols and phosphatidylethanolamines, which are major components of membrane phospholipids in bacteria. Displays bactericidal activity against Gram-positive bacteria by directly hydrolyzing phospholipids of the bacterial membrane. In pulmonary epithelium, may contribute to host defense response against adenoviral infection. Prevents adenovirus entry into host cells by hydrolyzing host cell plasma membrane, releasing C16:0 LPCs that inhibit virus-mediated membrane fusion and viral infection. Likely prevents adenoviral entry into the endosomes of host cells. May play a role in maturation and activation of innate immune cells including macrophages, group 2 innate lymphoid cells and mast cells. This is Group 10 secretory phospholipase A2 (Pla2g10) from Mus musculus (Mouse).